Reading from the N-terminus, the 98-residue chain is Peptide YY (98 aa).

A signal peptide spans 1–28; sequence MVAVRRPWPVMVAMLLVLLACLGALVDA. At serine 41 the chain carries Phosphoserine. Tyrosine 64 carries the post-translational modification Tyrosine amide. A propeptide spanning residues 68–98 is cleaved from the precursor; the sequence is EVPAALFSKLLFTDDSENLPFRSRPEGVDQW.

It belongs to the NPY family. The peptide YY form is cleaved at Pro-30 by the prolyl endopeptidase FAP (seprase) activity (in vitro) to generate peptide YY(3-36).

The protein localises to the secreted. Its function is as follows. This gut peptide inhibits exocrine pancreatic secretion, has a vasoconstrictory action and inhibitis jejunal and colonic mobility. This chain is Peptide YY (Pyy), found in Rattus norvegicus (Rat).